The primary structure comprises 320 residues: Glycerol-3-phosphate dehydrogenase [NAD(P)+] (320 aa).

NADPH contacts are provided by S14, F15, R35, and K109. Sn-glycerol 3-phosphate-binding residues include K109 and G137. A141 contacts NADPH. 5 residues coordinate sn-glycerol 3-phosphate: K192, D248, S258, R259, and N260. The active-site Proton acceptor is the K192. R259 provides a ligand contact to NADPH. NADPH-binding residues include L283 and E285.

It belongs to the NAD-dependent glycerol-3-phosphate dehydrogenase family.

It is found in the cytoplasm. It catalyses the reaction sn-glycerol 3-phosphate + NAD(+) = dihydroxyacetone phosphate + NADH + H(+). The enzyme catalyses sn-glycerol 3-phosphate + NADP(+) = dihydroxyacetone phosphate + NADPH + H(+). The protein operates within membrane lipid metabolism; glycerophospholipid metabolism. Catalyzes the reduction of the glycolytic intermediate dihydroxyacetone phosphate (DHAP) to sn-glycerol 3-phosphate (G3P), the key precursor for phospholipid synthesis. In Rickettsia typhi (strain ATCC VR-144 / Wilmington), this protein is Glycerol-3-phosphate dehydrogenase [NAD(P)+].